The chain runs to 128 residues: Gene 64 protein (128 aa).

In Mycobacterium phage L5 (Mycobacteriophage L5), this protein is Gene 64 protein (64).